A 370-amino-acid chain; its full sequence is Coproporphyrin III ferrochelatase (370 aa).

Residues Ser58 and Tyr127 each coordinate Fe-coproporphyrin III. Residues His189 and Glu276 each contribute to the Fe(2+) site.

The protein belongs to the ferrochelatase family.

It is found in the cytoplasm. The catalysed reaction is Fe-coproporphyrin III + 2 H(+) = coproporphyrin III + Fe(2+). The protein operates within porphyrin-containing compound metabolism; protoheme biosynthesis. Involved in coproporphyrin-dependent heme b biosynthesis. Catalyzes the insertion of ferrous iron into coproporphyrin III to form Fe-coproporphyrin III. This is Coproporphyrin III ferrochelatase from Corynebacterium glutamicum (strain ATCC 13032 / DSM 20300 / JCM 1318 / BCRC 11384 / CCUG 27702 / LMG 3730 / NBRC 12168 / NCIMB 10025 / NRRL B-2784 / 534).